Consider the following 212-residue polypeptide: Imidazole glycerol phosphate synthase subunit HisH (212 aa).

The Glutamine amidotransferase type-1 domain maps to 3–212 (SIAVVDYGMG…LLSNFLKWTP (210 aa)). The Nucleophile role is filled by Cys-82. Active-site residues include His-192 and Glu-194.

As to quaternary structure, heterodimer of HisH and HisF.

Its subcellular location is the cytoplasm. The catalysed reaction is 5-[(5-phospho-1-deoxy-D-ribulos-1-ylimino)methylamino]-1-(5-phospho-beta-D-ribosyl)imidazole-4-carboxamide + L-glutamine = D-erythro-1-(imidazol-4-yl)glycerol 3-phosphate + 5-amino-1-(5-phospho-beta-D-ribosyl)imidazole-4-carboxamide + L-glutamate + H(+). It catalyses the reaction L-glutamine + H2O = L-glutamate + NH4(+). It participates in amino-acid biosynthesis; L-histidine biosynthesis; L-histidine from 5-phospho-alpha-D-ribose 1-diphosphate: step 5/9. Its function is as follows. IGPS catalyzes the conversion of PRFAR and glutamine to IGP, AICAR and glutamate. The HisH subunit catalyzes the hydrolysis of glutamine to glutamate and ammonia as part of the synthesis of IGP and AICAR. The resulting ammonia molecule is channeled to the active site of HisF. The chain is Imidazole glycerol phosphate synthase subunit HisH from Nitrosomonas europaea (strain ATCC 19718 / CIP 103999 / KCTC 2705 / NBRC 14298).